Here is a 150-residue protein sequence, read N- to C-terminus: Large ribosomal subunit protein uL11 (150 aa).

The protein belongs to the universal ribosomal protein uL11 family. In terms of assembly, part of the ribosomal stalk of the 50S ribosomal subunit. Interacts with L10 and the large rRNA to form the base of the stalk. L10 forms an elongated spine to which L12 dimers bind in a sequential fashion forming a multimeric L10(L12)X complex. Post-translationally, one or more lysine residues are methylated.

Its function is as follows. Forms part of the ribosomal stalk which helps the ribosome interact with GTP-bound translation factors. The chain is Large ribosomal subunit protein uL11 from Ureaplasma parvum serovar 3 (strain ATCC 27815 / 27 / NCTC 11736).